We begin with the raw amino-acid sequence, 396 residues long: Na(+)/H(+) antiporter NhaA (396 aa).

11 helical membrane-spanning segments follow: residues 14–34, 59–79, 95–115, 124–144, 154–174, 178–198, 205–225, 254–274, 278–298, 328–348, and 363–383; these read ASGI…NSGL, LLLW…GLEV, TFPA…YTFF, AGWA…MALL, VFLL…IALF, QLSL…LWMN, IGLY…SGVH, ALHP…NAGV, GIGL…GLFV, IFAV…IASL, and LGIL…LRMS.

The protein belongs to the NhaA Na(+)/H(+) (TC 2.A.33) antiporter family.

Its subcellular location is the cell inner membrane. The catalysed reaction is Na(+)(in) + 2 H(+)(out) = Na(+)(out) + 2 H(+)(in). In terms of biological role, na(+)/H(+) antiporter that extrudes sodium in exchange for external protons. This chain is Na(+)/H(+) antiporter NhaA, found in Aeromonas salmonicida (strain A449).